Reading from the N-terminus, the 388-residue chain is Succinate--CoA ligase [ADP-forming] subunit beta (388 aa).

Positions 9-244 (KSLFAEYGLP…PSQDDAREAH (236 aa)) constitute an ATP-grasp domain. ATP is bound by residues Lys46, 53–55 (GRG), Glu99, Thr102, and Glu107. Mg(2+) contacts are provided by Asn199 and Asp213. Substrate-binding positions include Asn264 and 321-323 (GIV).

This sequence belongs to the succinate/malate CoA ligase beta subunit family. Heterotetramer of two alpha and two beta subunits. Mg(2+) serves as cofactor.

It carries out the reaction succinate + ATP + CoA = succinyl-CoA + ADP + phosphate. The catalysed reaction is GTP + succinate + CoA = succinyl-CoA + GDP + phosphate. The protein operates within carbohydrate metabolism; tricarboxylic acid cycle; succinate from succinyl-CoA (ligase route): step 1/1. Functionally, succinyl-CoA synthetase functions in the citric acid cycle (TCA), coupling the hydrolysis of succinyl-CoA to the synthesis of either ATP or GTP and thus represents the only step of substrate-level phosphorylation in the TCA. The beta subunit provides nucleotide specificity of the enzyme and binds the substrate succinate, while the binding sites for coenzyme A and phosphate are found in the alpha subunit. This chain is Succinate--CoA ligase [ADP-forming] subunit beta, found in Shewanella denitrificans (strain OS217 / ATCC BAA-1090 / DSM 15013).